The sequence spans 564 residues: Septation ring formation regulator EzrA (564 aa).

Residues 1–4 lie on the Extracellular side of the membrane; sequence MVLF. A helical transmembrane segment spans residues 5-23; sequence IILAILVVILIAIGVLFYM. Residues 24–564 are Cytoplasmic-facing; it reads RSNKRNLIEK…KHIEEQVIKE (541 aa). 4 coiled-coil regions span residues 84-126, 165-223, 271-303, and 350-435; these read VEEK…HQVT, EAAE…LIRE, MISRLELDEANNKLENINDKLDEMYDLIEYEVK, and VRQF…RRLL.

It belongs to the EzrA family.

Its subcellular location is the cell membrane. Negative regulator of FtsZ ring formation; modulates the frequency and position of FtsZ ring formation. Inhibits FtsZ ring formation at polar sites. Interacts either with FtsZ or with one of its binding partners to promote depolymerization. This chain is Septation ring formation regulator EzrA, found in Staphylococcus epidermidis (strain ATCC 35984 / DSM 28319 / BCRC 17069 / CCUG 31568 / BM 3577 / RP62A).